The sequence spans 503 residues: Maturase K (503 aa).

It belongs to the intron maturase 2 family. MatK subfamily.

Its subcellular location is the plastid. It localises to the chloroplast. Usually encoded in the trnK tRNA gene intron. Probably assists in splicing its own and other chloroplast group II introns. This Liquidambar formosana (Formosan gum) protein is Maturase K.